The primary structure comprises 314 residues: tRNA pseudouridine synthase B (314 aa).

Position 43 (His-43) interacts with substrate. Asp-48 (nucleophile) is an active-site residue. Tyr-76, Tyr-179, and Leu-200 together coordinate substrate.

The protein belongs to the pseudouridine synthase TruB family. Type 1 subfamily.

It catalyses the reaction uridine(55) in tRNA = pseudouridine(55) in tRNA. Its function is as follows. Responsible for synthesis of pseudouridine from uracil-55 in the psi GC loop of transfer RNAs. The sequence is that of tRNA pseudouridine synthase B from Cronobacter sakazakii (strain ATCC BAA-894) (Enterobacter sakazakii).